A 60-amino-acid polypeptide reads, in one-letter code: MAQLKVTLIHSAAHRLPKQRKIVEALGLKRVNSSVLQPDNEATRGALFQIAHLIKVEEVK.

Belongs to the universal ribosomal protein uL30 family. As to quaternary structure, part of the 50S ribosomal subunit.

The sequence is that of Large ribosomal subunit protein uL30 from Levilactobacillus brevis (strain ATCC 367 / BCRC 12310 / CIP 105137 / JCM 1170 / LMG 11437 / NCIMB 947 / NCTC 947) (Lactobacillus brevis).